The sequence spans 169 residues: Putative phosphoesterase SH1944 (169 aa).

Catalysis depends on His34, which acts as the Proton donor. 2 short sequence motifs (HXTX) span residues 34–37 (HITI) and 115–118 (HFTI). His115 functions as the Proton acceptor in the catalytic mechanism.

Belongs to the 2H phosphoesterase superfamily. YjcG family.

The sequence is that of Putative phosphoesterase SH1944 from Staphylococcus haemolyticus (strain JCSC1435).